Here is a 253-residue protein sequence, read N- to C-terminus: Small ribosomal subunit protein uS2 (253 aa).

An N-acetylserine modification is found at S2. The segment at 212–253 (QQAAEEAAAGEEDDEAKEEVAAEEQTEAADWAEGQSEEVASW) is disordered. Residues 219–238 (AAGEEDDEAKEEVAAEEQTE) show a composition bias toward acidic residues.

This sequence belongs to the universal ribosomal protein uS2 family. As to quaternary structure, component of the small ribosomal subunit. Mature ribosomes consist of a small (40S) and a large (60S) subunit. The 40S subunit contains about 33 different proteins and 1 molecule of RNA (18S). The 60S subunit contains about 49 different proteins and 3 molecules of RNA (25S, 5.8S and 5S). Interacts with RPS21.

Its subcellular location is the cytoplasm. In terms of biological role, required for the assembly and/or stability of the 40S ribosomal subunit. Required for the processing of the 20S rRNA-precursor to mature 18S rRNA in a late step of the maturation of 40S ribosomal subunits. The sequence is that of Small ribosomal subunit protein uS2 from Eremothecium gossypii (strain ATCC 10895 / CBS 109.51 / FGSC 9923 / NRRL Y-1056) (Yeast).